Here is a 441-residue protein sequence, read N- to C-terminus: Damage-control phosphatase ARMT1 (441 aa).

The residue at position 2 (Ala2) is an N-acetylalanine. Lys40 carries the N6-acetyllysine modification. Ser102 is modified (phosphoserine). Mn(2+) is bound by residues Asp253 and Asn254. Position 253–254 (253–254 (DN)) interacts with substrate. S-adenosyl-L-methionine-binding residues include Glu258 and Asp291. Position 291 (Asp291) interacts with Mn(2+). Substrate is bound by residues 367–371 (DLNYR) and Lys404. The short motif at 401-404 (RTLK) is the Subfamily III RTxK motif element.

The protein belongs to the damage-control phosphatase family. Sugar phosphate phosphatase III subfamily. Mn(2+) is required as a cofactor. The cofactor is Ni(2+). Post-translationally, automethylated.

It carries out the reaction beta-D-fructose 1-phosphate + H2O = D-fructose + phosphate. It catalyses the reaction beta-D-fructose 6-phosphate = dihydroxyacetone + D-glyceraldehyde 3-phosphate. The enzyme catalyses L-glutamyl-[protein] + S-adenosyl-L-methionine = [protein]-L-glutamate 5-O-methyl ester + S-adenosyl-L-homocysteine. Its function is as follows. Metal-dependent phosphatase that shows phosphatase activity against several substrates, including fructose-1-phosphate and fructose-6-phosphate. Its preference for fructose-1-phosphate, a strong glycating agent that causes DNA damage rather than a canonical yeast metabolite, suggests a damage-control function in hexose phosphate metabolism. Has also been shown to have O-methyltransferase activity that methylates glutamate residues of target proteins to form gamma-glutamyl methyl ester residues. Possibly methylates PCNA, suggesting it is involved in the DNA damage response. The protein is Damage-control phosphatase ARMT1 of Bos taurus (Bovine).